Reading from the N-terminus, the 313-residue chain is MFSIVSSRPKSLVRPNSRSIVLPALVALTSIIFSKDNRLADKMESGKLHYKDVNSTFNVDKPYKSRSKPNYPGHVPLNAFEKLLMMAGSSIGSYLHPERNEFIVGLGESTAFTPVLRRLQRQMLSDPVGRQILRERPRITSESLDLDYLRSLPKNTIGSAYIQWLDREGVSPDTRVPVRYIDDEELAYIYQRYRECHDFYHAITGLPIIIEGEIAVKVLEFTNIGIPMSGLGGLFAPLRLRPKQRERLYGIYYPWAFKSGLNSKPLINVYWEKILEQDINEFRRDMGIEQPPDLRELRRKQKKLPEPERENAN.

4 residues coordinate Zn(2+): His197, Asp198, His201, and Glu213. The segment at 290-313 (QPPDLRELRRKQKKLPEPERENAN) is disordered. The segment covering 303–313 (KLPEPERENAN) has biased composition (basic and acidic residues).

The protein belongs to the COQ4 family. Component of a multi-subunit COQ enzyme complex, composed of at least COQ3, COQ4, COQ5, COQ6, COQ7 and COQ9. It depends on Zn(2+) as a cofactor.

It localises to the mitochondrion inner membrane. The enzyme catalyses a 4-hydroxy-3-methoxy-5-(all-trans-polyprenyl)benzoate + H(+) = a 2-methoxy-6-(all-trans-polyprenyl)phenol + CO2. It participates in cofactor biosynthesis; ubiquinone biosynthesis. Lyase that catalyzes the C1-decarboxylation of 4-hydroxy-3-methoxy-5-(all-trans-polyprenyl)benzoic acid into 2-methoxy-6-(all-trans-polyprenyl)phenol during ubiquinone biosynthesis. This chain is Ubiquinone biosynthesis protein COQ4, mitochondrial, found in Meyerozyma guilliermondii (strain ATCC 6260 / CBS 566 / DSM 6381 / JCM 1539 / NBRC 10279 / NRRL Y-324) (Yeast).